The chain runs to 402 residues: Sex hormone-binding globulin (402 aa).

The signal sequence occupies residues 1-29 (MESRGPLATSRLLLLLLLLLLRHTRQGWA). Residue Thr-36 is glycosylated (O-linked (GalNAc...) threonine). Laminin G-like domains lie at 45-217 (VHLS…LRSC) and 224-390 (GIFL…THSC). Intrachain disulfides connect Cys-193/Cys-217 and Cys-362/Cys-390. N-linked (GlcNAc...) asparagine glycosylation is found at Asn-380 and Asn-396.

As to quaternary structure, homodimer. Post-translationally, variant Asn-356 contains one N-linked (GlcNAc...) at position 356. As to expression, isoform 1 and isoform 2 are present in liver and testis.

It localises to the secreted. Functionally, functions as an androgen transport protein, but may also be involved in receptor mediated processes. Each dimer binds one molecule of steroid. Specific for 5-alpha-dihydrotestosterone, testosterone, and 17-beta-estradiol. Regulates the plasma metabolic clearance rate of steroid hormones by controlling their plasma concentration. The polypeptide is Sex hormone-binding globulin (Homo sapiens (Human)).